The sequence spans 201 residues: Pyridoxal 5'-phosphate synthase subunit PdxT (201 aa).

L-glutamine is bound at residue 49–51 (GES). The active-site Nucleophile is Cys81. L-glutamine-binding positions include Arg110 and 139–140 (IR). Residues His180 and Glu182 each act as charge relay system in the active site.

The protein belongs to the glutaminase PdxT/SNO family. As to quaternary structure, in the presence of PdxS, forms a dodecamer of heterodimers. Only shows activity in the heterodimer.

It catalyses the reaction aldehydo-D-ribose 5-phosphate + D-glyceraldehyde 3-phosphate + L-glutamine = pyridoxal 5'-phosphate + L-glutamate + phosphate + 3 H2O + H(+). The enzyme catalyses L-glutamine + H2O = L-glutamate + NH4(+). Its pathway is cofactor biosynthesis; pyridoxal 5'-phosphate biosynthesis. Functionally, catalyzes the hydrolysis of glutamine to glutamate and ammonia as part of the biosynthesis of pyridoxal 5'-phosphate. The resulting ammonia molecule is channeled to the active site of PdxS. The sequence is that of Pyridoxal 5'-phosphate synthase subunit PdxT from Salinispora tropica (strain ATCC BAA-916 / DSM 44818 / JCM 13857 / NBRC 105044 / CNB-440).